A 66-amino-acid chain; its full sequence is Opicalcin-2 (66 aa).

The signal sequence occupies residues 1–22 (MKPSLIIVTFIVVFMTISCVAA). Residues 23-31 (DDEQETWIE) constitute a propeptide that is removed on maturation. Intrachain disulfides connect Cys-36-Cys-50, Cys-43-Cys-54, and Cys-49-Cys-65. The tract at residues 55 to 57 (KRR) is essential for stimulation of [3H]ryanodine binding to RYR1.

It belongs to the scorpion calcin family. As to expression, expressed by the venom gland.

The protein resides in the secreted. In terms of biological role, this toxin stabilizes ryanodine receptor 1 (RyR1) opening in a long-lasting subconductance state (40% of the full conductance state). Furthermore, it triggers calcium release from sarcoplasmic vesicles (64.2 nM are enough to induce a sharp release, and 50% of the total calcium is released after toxin (100 nM) addition) probably by acting as a cell-penetrating peptide (CPP). In addition, it has been shown to dose-dependently stimulate ryanodine binding to RyR1 (EC(50)=3.2 nM). It also augments the bell-shaped calcium-[3H]ryanodine binding curve that is maximal at about 10 uM calcium concentration. It binds a different site as ryanodine. It acts synergistically with caffeine. In vivo, intracerebroventricular injection into mice induces neurotoxic symptoms, followed by death. This is Opicalcin-2 from Opistophthalmus carinatus (African yellow leg scorpion).